The chain runs to 345 residues: Src kinase-associated phosphoprotein 1 (345 aa).

The PH domain occupies 109–212; it reads KIFKQGYLER…WVEQIQFLVK (104 aa). The disordered stretch occupies residues 226-274; it reads ETYDDIESTESSPVVGLTNDSENSLQEDDVYESIPGDEETEESEDENYE. Acidic residues predominate over residues 250–272; it reads LQEDDVYESIPGDEETEESEDEN. The 62-residue stretch at 283–344 folds into the SH3 domain; sequence FYGDYYQGLW…PKDYLTLAFD (62 aa).

The protein belongs to the SKAP family. Homodimer. In terms of processing, phosphorylated on tyrosines.

It localises to the cytoplasm. The protein localises to the nucleus. It is found in the cell membrane. Positively regulates T-cell receptor signaling. Required for optimal conjugation between T-cells and antigen-presenting cells. The sequence is that of Src kinase-associated phosphoprotein 1 (skap1) from Xenopus tropicalis (Western clawed frog).